The sequence spans 63 residues: Crotasin (63 aa).

The signal sequence occupies residues 1–22 (MKILYLLSAFLFLAFLSESGNA). Cystine bridges form between Cys26/Cys56, Cys33/Cys50, and Cys38/Cys57.

In terms of tissue distribution, highly expressed in pancreas, heart, liver, brain and kidney. Expressed to a low extent in the venom gland.

The protein resides in the secreted. This is Crotasin from Crotalus durissus terrificus (South American rattlesnake).